We begin with the raw amino-acid sequence, 168 residues long: ATP synthase subunit b (168 aa).

A helical transmembrane segment spans residues 9–29 (AIPFGTIAYTLFIFLLLLVML).

It belongs to the ATPase B chain family. In terms of assembly, F-type ATPases have 2 components, F(1) - the catalytic core - and F(0) - the membrane proton channel. F(1) has five subunits: alpha(3), beta(3), gamma(1), delta(1), epsilon(1). F(0) has three main subunits: a(1), b(2) and c(10-14). The alpha and beta chains form an alternating ring which encloses part of the gamma chain. F(1) is attached to F(0) by a central stalk formed by the gamma and epsilon chains, while a peripheral stalk is formed by the delta and b chains.

The protein resides in the cell membrane. F(1)F(0) ATP synthase produces ATP from ADP in the presence of a proton or sodium gradient. F-type ATPases consist of two structural domains, F(1) containing the extramembraneous catalytic core and F(0) containing the membrane proton channel, linked together by a central stalk and a peripheral stalk. During catalysis, ATP synthesis in the catalytic domain of F(1) is coupled via a rotary mechanism of the central stalk subunits to proton translocation. Its function is as follows. Component of the F(0) channel, it forms part of the peripheral stalk, linking F(1) to F(0). This is ATP synthase subunit b from Bacillus cereus (strain ATCC 10987 / NRS 248).